We begin with the raw amino-acid sequence, 143 residues long: Transcriptional regulator MraZ (143 aa).

2 consecutive SpoVT-AbrB domains span residues 5-47 and 76-119; these read EYTH…PLIE and ACEC…DAER.

This sequence belongs to the MraZ family. In terms of assembly, forms oligomers.

Its subcellular location is the cytoplasm. It is found in the nucleoid. This Limosilactobacillus fermentum (strain NBRC 3956 / LMG 18251) (Lactobacillus fermentum) protein is Transcriptional regulator MraZ.